The sequence spans 779 residues: Pre-mRNA-splicing factor cef-1 (779 aa).

HTH myb-type domains lie at 1–56 and 57–106; these read MPVV…DPSI and KKIE…DEAE. DNA-binding regions (H-T-H motif) lie at residues 29–52 and 80–102; these read WARV…NEWL and WRTI…QRLL. 4 disordered regions span residues 113-192, 246-284, 424-448, and 497-525; these read LGLT…ESRR, EYQR…PSVQ, TPLR…LRTP, and WELE…DRRE. Residues 127 to 152 are compositionally biased toward basic and acidic residues; that stretch reads SADDVRKLRPGEVDPDPETKPARPDT. A coiled-coil region spans residues 157–204; the sequence is EDEKEMLSEARARLANTQGKKAKRKARERQQEESRRLAALQKRRELKT. 2 stretches are compositionally biased toward basic and acidic residues: residues 246-256 and 263-281; these read EYQRAHFDPKK and RKGE…DKDP. Residues 653–772 are a coiled coil; sequence DEEEEQISTM…EELDALTLNG (120 aa).

The protein belongs to the CEF1 family. As to quaternary structure, associated with the spliceosome.

It localises to the cytoplasm. Its subcellular location is the nucleus. In terms of biological role, involved in pre-mRNA splicing and cell cycle control. The polypeptide is Pre-mRNA-splicing factor cef-1 (cef-1) (Neurospora crassa (strain ATCC 24698 / 74-OR23-1A / CBS 708.71 / DSM 1257 / FGSC 987)).